Here is a 109-residue protein sequence, read N- to C-terminus: Protein reprimo (109 aa).

N-linked (GlcNAc...) asparagine glycosylation is found at N7 and N18. A helical membrane pass occupies residues 56–76; that stretch reads VVQIAVMCVLSLTVVFGIFFL. The residue at position 98 (S98) is a Phosphoserine.

Belongs to the reprimo family.

The protein localises to the cytoplasm. Its subcellular location is the membrane. Its function is as follows. May be involved in the regulation of p53-dependent G2 arrest of the cell cycle. Seems to induce cell cycle arrest by inhibiting CDK1 activity and nuclear translocation of the CDC2 cyclin B1 complex. The protein is Protein reprimo (RPRM) of Homo sapiens (Human).